The following is a 426-amino-acid chain: MKLQKPKGTQDILPVAAAKWQYVEGVARETFKQYHYGEIRTPMFEHYEVISRSVGDTTDIVTKEMYDFYDKGDRHITLRPEGTAPVVRSYVENKLFAPEVQKPVKLYYIGSMFRYERPQAGRLREFHQIGVECFGSANPATDVETIAMAYHLFERLGIKEVTLHLNSLGNAASRAAYRQALIDYLSPMRETLSKDSQRRLDENPLRVLDSKEKEDKIAVANAPSILDYLDEESQAHFDAVRSMLEVLAIPYVIDTNMVRGLDYYNHTIFEFITEVDQSELTICAGGRYDGLVEYFGGPATPGFGFGLGLERLLLILDKQGVELPVEEGLDVYIAVLGAYANVAALALTQAIRRQGFTVERDYLGRKIKAQFKSADAFKAKVVITLGESEIKTGQAVLKHNQTRQEMTVSFDQIQTNFASIFAECIQ.

The protein belongs to the class-II aminoacyl-tRNA synthetase family. As to quaternary structure, homodimer.

The protein resides in the cytoplasm. The enzyme catalyses tRNA(His) + L-histidine + ATP = L-histidyl-tRNA(His) + AMP + diphosphate + H(+). The protein is Histidine--tRNA ligase of Streptococcus equi subsp. equi (strain 4047).